The sequence spans 842 residues: Glycogen phosphorylase, muscle form (842 aa).

At Ser-2 the chain carries N-acetylserine. A Phosphoserine; by PHK; in form phosphorylase A modification is found at Ser-15. Ser-26 bears the Phosphoserine mark. Residues Asp-43 and Tyr-76 each contribute to the AMP site. Phosphotyrosine is present on residues Tyr-204 and Tyr-227. 310–319 (RRFKSSKFGC) contributes to the AMP binding site. At Ser-430 the chain carries Phosphoserine. Tyr-473 carries the post-translational modification Phosphotyrosine. The residue at position 514 (Ser-514) is a Phosphoserine. N6-(pyridoxal phosphate)lysine is present on Lys-681. A phosphoserine mark is found at Ser-747 and Ser-748.

It belongs to the glycogen phosphorylase family. As to quaternary structure, homodimer. Homotetramer; to form the enzymatically active phosphorylase A. It depends on pyridoxal 5'-phosphate as a cofactor. Phosphorylation of Ser-15 converts phosphorylase B (unphosphorylated) to phosphorylase A.

It carries out the reaction [(1-&gt;4)-alpha-D-glucosyl](n) + phosphate = [(1-&gt;4)-alpha-D-glucosyl](n-1) + alpha-D-glucose 1-phosphate. With respect to regulation, allosterically regulated through the non-covalent binding of metabolites, being activated by AMP and inhibited by ATP, ADP, and glucose-6-phosphate. The activity is also controlled by post-translational modifications including phosphorylation. Functionally, allosteric enzyme that catalyzes the rate-limiting step in glycogen catabolism, the phosphorolytic cleavage of glycogen to produce glucose-1-phosphate, and plays a central role in maintaining cellular and organismal glucose homeostasis. This Rattus norvegicus (Rat) protein is Glycogen phosphorylase, muscle form.